The following is a 559-amino-acid chain: Nucleoprotein (559 aa).

The interval 53-235 (MRKEKRTDSD…ITQEQSQINI (183 aa)) is binding site for the cap structure m7GTP. Mn(2+)-binding residues include Asp378 and Glu380. Zn(2+) is bound by residues Glu388, Cys495, His498, and Cys519. Position 523 (Asp523) interacts with Mn(2+).

Belongs to the arenaviridae nucleocapsid protein family. Homomultimerizes to form the nucleocapsid. Binds to viral genomic RNA. Interacts with glycoprotein G2. Interacts with protein Z; this interaction probably directs the encapsidated genome to budding sites. Interacts with protein L; this interaction does not interfere with Z-L interaction. Interacts with host IKBKE (via Protein kinase domain); the interaction inhibits IKBKE kinase activity.

It localises to the virion. Its subcellular location is the host cytoplasm. Functionally, encapsidates the genome, protecting it from nucleases. The encapsidated genomic RNA is termed the nucleocapsid (NC). Serves as template for viral transcription and replication. The increased presence of protein N in host cell does not seem to trigger the switch from transcription to replication as observed in other negative strain RNA viruses. Through the interaction with host IKBKE, strongly inhibits the phosphorylation and nuclear translocation of host IRF3, a protein involved in interferon activation pathway, leading to the inhibition of interferon-beta and IRF3-dependent promoters activation. Also encodes a functional 3'-5' exoribonuclease that degrades preferentially dsRNA substrates and thereby participates in the suppression of interferon induction. The protein is Nucleoprotein of Sooretamys angouya (Paraguayan rice rat).